The primary structure comprises 413 residues: Elongation factor 1-alpha (413 aa).

GTP contacts are provided by residues 1-7 (HVDSGKS), 77-81 (DAPGH), and 139-142 (NKMD). Residues 1–228 (HVDSGKSTTT…DAILPPARPT (228 aa)) form the tr-type G domain. E287 and E360 each carry 5-glutamyl glycerylphosphorylethanolamine.

This sequence belongs to the TRAFAC class translation factor GTPase superfamily. Classic translation factor GTPase family. EF-Tu/EF-1A subfamily.

Its subcellular location is the cytoplasm. This protein promotes the GTP-dependent binding of aminoacyl-tRNA to the A-site of ribosomes during protein biosynthesis. This chain is Elongation factor 1-alpha, found in Heliocheilus albipunctella (Millet head miner).